The sequence spans 332 residues: Tetraacyldisaccharide 4'-kinase (332 aa).

T58–T65 contributes to the ATP binding site.

It belongs to the LpxK family.

The catalysed reaction is a lipid A disaccharide + ATP = a lipid IVA + ADP + H(+). The protein operates within glycolipid biosynthesis; lipid IV(A) biosynthesis; lipid IV(A) from (3R)-3-hydroxytetradecanoyl-[acyl-carrier-protein] and UDP-N-acetyl-alpha-D-glucosamine: step 6/6. Transfers the gamma-phosphate of ATP to the 4'-position of a tetraacyldisaccharide 1-phosphate intermediate (termed DS-1-P) to form tetraacyldisaccharide 1,4'-bis-phosphate (lipid IVA). This Shewanella piezotolerans (strain WP3 / JCM 13877) protein is Tetraacyldisaccharide 4'-kinase.